A 565-amino-acid polypeptide reads, in one-letter code: MEDSDSAAKQLGLAEAAAVAAAAAVAAAAAAAAGGEAEEPVLSRDEDSEEDADSEAERETPRVTAVAVMAAEPGHMDMGAEALPGPDETAAAAAFAEVTTVTVANVGAAADNVFTTSVANAASISGHVLSGRTALQIGDSLNTEKATLIVVHTDGSIVETTGLKGPAAPLTPGPQSPPTPLAPGQEKGGTKYNWDPSVYDSELPVRCRNISGTLYKNRLGSGGRGRCIKQGENWYSPTEFEAMAGRASSKDWKRSIRYAGRPLQCLIQDGILNPHAASCTCAACCDNMTLSGPVRLFVPYKRRKKENELPTTPVKKDSPKNITLLPATAATTFTVTPSGQITTSGALTFDRASTVEATAVISESPAQGDVFAGATVQEASVQPPCRASHPEPHYPGYQDSCQIAPFPEAALPTSHPKIVLTSLPALAVPPPTPTKAAPPALVNGLELSEPRSWLYLEEMVNSLLTTAQQLKTLFEQAKHASTYREAAANQAKIHADAERKEQSCVNCGREAMNECTGCHKVNYCSTFCQRKDWKDHQHICGQSAAVTVQADEVHVAESVMEKVTV.

Disordered regions lie at residues G34–R62 and G162–T190. Pro residues predominate over residues P169–L181. T171 is modified (phosphothreonine). S176 carries the phosphoserine modification. Residue T179 is modified to Phosphothreonine. One can recognise an SAND domain in the interval N193–N273. Positions K301 to K316 match the Nuclear localization signal motif. The interaction with LMO4 stretch occupies residues I403–K478. T432 is subject to Phosphothreonine. At S448 the chain carries Phosphoserine. Zn(2+) contacts are provided by C504, C507, C515, C518, C524, C528, H536, and C540. The MYND-type zinc-finger motif lies at C504–C540.

As to quaternary structure, homodimer. Interacts with LMO4; LMO4 blocks export from nucleus. Interacts with LMO2 and CLIM2. May interact with the corepressors NCOR1 and NCRO2. Identified in a complex with XRCC5 and XRCC6. Interacts (via the SAND domain) with the DNA-PK complex subunit XRCC6; the interaction is direct and may be inhibited by DNA-binding. Post-translationally, may be phosphorylated by DNA-PK complex in a DNA independent manner (in vitro).

It is found in the nucleus. Its function is as follows. Transcription factor that binds to sequence with multiple copies of 5'-TTC[CG]G-3' present in its own promoter and that of the HNRPA2B1 gene. Down-regulates transcription of these genes. Binds to the retinoic acid response element (RARE) 5'-AGGGTTCACCGAAAGTTCA-3'. Activates the proenkephalin gene independently of promoter binding, probably through protein-protein interaction. Regulates epithelial cell proliferation and side-branching in the mammary gland. Required for neural tube closure and skeletal patterning. Controls the expression of peripheral tissue antigens in pancreatic lymph nodes. Transcriptional activator of EIF4G3. May also involved in behavior. The sequence is that of Deformed epidermal autoregulatory factor 1 homolog (DEAF1) from Pan troglodytes (Chimpanzee).